The sequence spans 249 residues: (S)-1-Phenylethanol dehydrogenase (249 aa).

Residues 17–19, Asp-38, 61–63, Asn-89, and Tyr-93 contribute to the NAD(+) site; these read NGI and CDV. Ser-141 is a substrate binding site. Tyr-154 (proton acceptor) is an active-site residue. NAD(+) contacts are provided by residues Lys-158, 184 to 187, and Thr-191; that span reads PSLV.

Belongs to the short-chain dehydrogenases/reductases (SDR) family. In terms of assembly, homotetramer.

The catalysed reaction is (S)-1-phenylethanol + NAD(+) = acetophenone + NADH + H(+). In terms of biological role, catalyzes the NAD-dependent stereospecific oxidation of (S)-1-phenylethanol to acetophenone in the degradation of ethylbenzene. The protein is (S)-1-Phenylethanol dehydrogenase (ped) of Aromatoleum aromaticum (strain DSM 19018 / LMG 30748 / EbN1) (Azoarcus sp. (strain EbN1)).